The sequence spans 133 residues: Probable nuclear transport factor 2 (133 aa).

Positions 10-128 (VAKAFIQHYY…YFIGNEIFRL (119 aa)) constitute an NTF2 domain.

Its subcellular location is the cytoplasm. Its function is as follows. Facilitates protein transport into the nucleus. Could be part of a multicomponent system of cytosolic factors that assemble at the pore complex during nuclear import. This is Probable nuclear transport factor 2 (ran-4) from Caenorhabditis elegans.